The primary structure comprises 154 residues: Ribonuclease H (154 aa).

The 142-residue stretch at 1 to 142 (MRKQVEIFTD…CDELARAAAG (142 aa)) folds into the RNase H type-1 domain. Mg(2+) is bound by residues D10, E48, D70, and D134.

Belongs to the RNase H family. In terms of assembly, monomer. It depends on Mg(2+) as a cofactor.

Its subcellular location is the cytoplasm. The catalysed reaction is Endonucleolytic cleavage to 5'-phosphomonoester.. In terms of biological role, endonuclease that specifically degrades the RNA of RNA-DNA hybrids. This chain is Ribonuclease H, found in Pectobacterium carotovorum subsp. carotovorum (strain PC1).